The chain runs to 305 residues: tRNA dimethylallyltransferase (305 aa).

8-15 contributes to the ATP binding site; sequence GPTASGKT. 10–15 provides a ligand contact to substrate; it reads TASGKT. Positions 33–36 are interaction with substrate tRNA; it reads DSQQ.

This sequence belongs to the IPP transferase family. Monomer. It depends on Mg(2+) as a cofactor.

It carries out the reaction adenosine(37) in tRNA + dimethylallyl diphosphate = N(6)-dimethylallyladenosine(37) in tRNA + diphosphate. Its function is as follows. Catalyzes the transfer of a dimethylallyl group onto the adenine at position 37 in tRNAs that read codons beginning with uridine, leading to the formation of N6-(dimethylallyl)adenosine (i(6)A). The chain is tRNA dimethylallyltransferase from Anaeromyxobacter dehalogenans (strain 2CP-1 / ATCC BAA-258).